A 356-amino-acid polypeptide reads, in one-letter code: Geranylgeranyl pyrophosphate synthase penG (356 aa).

K83, R86, and H115 together coordinate isopentenyl diphosphate. Mg(2+) is bound by residues D122 and D126. R131 lines the dimethylallyl diphosphate pocket. R132 contributes to the isopentenyl diphosphate binding site. K209, T210, and Q243 together coordinate dimethylallyl diphosphate. Residue D246 participates in Mg(2+) binding. Dimethylallyl diphosphate is bound by residues N250, K260, and K270.

It belongs to the FPP/GGPP synthase family. Mg(2+) serves as cofactor.

The enzyme catalyses isopentenyl diphosphate + dimethylallyl diphosphate = (2E)-geranyl diphosphate + diphosphate. It catalyses the reaction isopentenyl diphosphate + (2E)-geranyl diphosphate = (2E,6E)-farnesyl diphosphate + diphosphate. The catalysed reaction is isopentenyl diphosphate + (2E,6E)-farnesyl diphosphate = (2E,6E,10E)-geranylgeranyl diphosphate + diphosphate. It functions in the pathway secondary metabolite biosynthesis. In terms of biological role, geranylgeranyl pyrophosphate synthase; part of the gene cluster that mediates the biosynthesis of the indole diterpenes penitrems. The geranylgeranyl diphosphate (GGPP) synthase ptmG catalyzes the first step in penitrem biosynthesis via conversion of farnesyl pyrophosphate and isopentyl pyrophosphate into geranylgeranyl pyrophosphate (GGPP). Condensation of indole-3-glycerol phosphate with GGPP by the prenyl transferase ptmC then forms 3-geranylgeranylindole (3-GGI). Epoxidation by the FAD-dependent monooxygenase ptmM leads to a epoxidized-GGI that is substrate of the terpene cyclase ptmB for cyclization to yield paspaline. Paspaline is subsequently converted to 13-desoxypaxilline by the cytochrome P450 monooxygenase ptmP, the latter being then converted to paxilline by the cytochrome P450 monooxygenase ptmQ. Paxilline is converted to beta-paxitriol via C-10 ketoreduction by the short-chain dehydrogenase ptmH which can be monoprenylated at the C-20 by the indole diterpene prenyltransferase ptmD. A two-step elimination (acetylation and elimination) process performed by the O-acetyltransferase ptmV and ptmI leads to the production of the prenylated form of penijanthine. The FAD-linked oxidoreductase ptmO then converts the prenylated form of penijanthine into PC-M5 which is in turn transformed into PC-M4 by the aromatic dimethylallyltransferase ptmE. Five sequential oxidative transformations performed by the cytochrome P450 monooxygenases ptmK, ptmU, ptmL, ptmN and ptmJ yield the various penitrem compounds. PtmK, ptmU and ptmM are involved in the formation of the key bicyclic ring of penitrem C via the formation of the intermediates secopenitrem D and penitrem D. PtmL catalyzes the epoxidation of penitrem D and C to yield penitrem B and F, respectively. PtmJ catalyzes the last benzylic hydroxylation to convert penitrem B to prenitrem E and penitrem F to penitrem A. This Penicillium ochrochloron protein is Geranylgeranyl pyrophosphate synthase penG.